Consider the following 234-residue polypeptide: Superoxide dismutase [Mn], mitochondrial (234 aa).

A mitochondrion-targeting transit peptide spans 1-34 (MFSIRSSSRVLLKASSATTRATLNAAASKTFTRS). Residues H60, H108, D198, and H202 each coordinate Mn(2+).

Belongs to the iron/manganese superoxide dismutase family. Homotetramer. Mn(2+) serves as cofactor.

It is found in the mitochondrion matrix. The catalysed reaction is 2 superoxide + 2 H(+) = H2O2 + O2. Its function is as follows. Destroys superoxide anion radicals which are normally produced within the cells and which are toxic to biological systems. The polypeptide is Superoxide dismutase [Mn], mitochondrial (SOD2) (Candida albicans (Yeast)).